We begin with the raw amino-acid sequence, 283 residues long: Acetyl-coenzyme A carboxylase carboxyl transferase subunit beta (283 aa).

Positions 23–283 constitute a CoA carboxyltransferase N-terminal domain; sequence LWIKCPSCSE…DFLMAGKAAA (261 aa). Zn(2+) contacts are provided by cysteine 27, cysteine 30, cysteine 46, and cysteine 49. The C4-type zinc finger occupies 27–49; the sequence is CPSCSEMLFTKEYEDNLSVCPHC.

This sequence belongs to the AccD/PCCB family. In terms of assembly, acetyl-CoA carboxylase is a heterohexamer composed of biotin carboxyl carrier protein (AccB), biotin carboxylase (AccC) and two subunits each of ACCase subunit alpha (AccA) and ACCase subunit beta (AccD). Zn(2+) serves as cofactor.

It is found in the cytoplasm. The enzyme catalyses N(6)-carboxybiotinyl-L-lysyl-[protein] + acetyl-CoA = N(6)-biotinyl-L-lysyl-[protein] + malonyl-CoA. It functions in the pathway lipid metabolism; malonyl-CoA biosynthesis; malonyl-CoA from acetyl-CoA: step 1/1. In terms of biological role, component of the acetyl coenzyme A carboxylase (ACC) complex. Biotin carboxylase (BC) catalyzes the carboxylation of biotin on its carrier protein (BCCP) and then the CO(2) group is transferred by the transcarboxylase to acetyl-CoA to form malonyl-CoA. The chain is Acetyl-coenzyme A carboxylase carboxyl transferase subunit beta from Novosphingobium aromaticivorans (strain ATCC 700278 / DSM 12444 / CCUG 56034 / CIP 105152 / NBRC 16084 / F199).